A 144-amino-acid polypeptide reads, in one-letter code: 3-hydroxyacyl-[acyl-carrier-protein] dehydratase FabZ (144 aa).

His48 is a catalytic residue.

Belongs to the thioester dehydratase family. FabZ subfamily.

The protein resides in the cytoplasm. The catalysed reaction is a (3R)-hydroxyacyl-[ACP] = a (2E)-enoyl-[ACP] + H2O. Its function is as follows. Involved in unsaturated fatty acids biosynthesis. Catalyzes the dehydration of short chain beta-hydroxyacyl-ACPs and long chain saturated and unsaturated beta-hydroxyacyl-ACPs. This is 3-hydroxyacyl-[acyl-carrier-protein] dehydratase FabZ from Bacillus licheniformis (strain ATCC 14580 / DSM 13 / JCM 2505 / CCUG 7422 / NBRC 12200 / NCIMB 9375 / NCTC 10341 / NRRL NRS-1264 / Gibson 46).